Reading from the N-terminus, the 60-residue chain is Cytochrome c oxidase assembly protein COX14 homolog (60 aa).

A helical transmembrane segment spans residues 10–32 (VGYRLFSGSMMLLTVYGGYLCVV).

It is found in the mitochondrion membrane. Plays a role in the assembly or stability of the cytochrome c oxidase complex (COX). This chain is Cytochrome c oxidase assembly protein COX14 homolog, found in Danio rerio (Zebrafish).